Reading from the N-terminus, the 511-residue chain is MLLLWLYQALPTSLTRILLTAGLCVPCALVIHGIYNLYFHPLRNVPGPKLGALTDLYAFYWNWIRGVGYSKQFDRWHKHYNSSVIRIGPNDVHTTQVELYDVIHKAGSTWLKDKSFYKHFGGLDAMIDPREYRTYRTHLAPLYSQRAVDGLVSKMDDDLAICGQKTTKMAENGKAVNMARVLTTLSTSMILYNLFSMDISLWECNDYHPFLEAFEHIMAQIWLFLSYPRLATCLSLIPGTSLARLAPSWTTFMNSCAAWCDEDARKQRASDDQSIRDSHSKRYYALKHTDANDKKSIIPAPLDELFSFIAGGTDTTAYTTGCAFFYILSSPSVCRKLVKELDENASFIRNGLDYHKIQTLPYLNAVIKETLRISVPVPGCLPRVVPEGGITVGSFHLPAGTALSITQQAISLNQDIFPSPLCFSPERWIGPAAAGLDKWNVAFGRGSRQCIGTTLAYLELRCVVAYFFSRFDMTLTAKNGDGHRWVDRFVAVNLDTVEVLVLSDRWSGARY.

The helical transmembrane segment at 17 to 37 (ILLTAGLCVPCALVIHGIYNL) threads the bilayer. Asn-81 and Asn-344 each carry an N-linked (GlcNAc...) asparagine glycan. Cys-450 is a heme binding site.

Belongs to the cytochrome P450 family. Heme serves as cofactor.

The protein resides in the membrane. Its function is as follows. Inactive cytochrome P450 monooxygenase; part of the gene cluster that mediates the biosynthesis of fungal ergot alkaloid. DmaW catalyzes the first step of ergot alkaloid biosynthesis by condensing dimethylallyl diphosphate (DMAP) and tryptophan to form 4-dimethylallyl-L-tryptophan. The second step is catalyzed by the methyltransferase easF that methylates 4-dimethylallyl-L-tryptophan in the presence of S-adenosyl-L-methionine, resulting in the formation of 4-dimethylallyl-L-abrine. The catalase easC and the FAD-dependent oxidoreductase easE then transform 4-dimethylallyl-L-abrine to chanoclavine-I which is further oxidized by easD in the presence of NAD(+), resulting in the formation of chanoclavine-I aldehyde. Agroclavine dehydrogenase easG then mediates the conversion of chanoclavine-I aldehyde to agroclavine via a non-enzymatic adduct reaction: the substrate is an iminium intermediate that is formed spontaneously from chanoclavine-I aldehyde in the presence of glutathione. Further conversion of agroclavine to paspalic acid is a two-step process involving oxidation of agroclavine to elymoclavine and of elymoclavine to paspalic acid, the second step being performed by the elymoclavine oxidase cloA. However, cloA does not encode a functional enzyme indicating that C.fusiformis terminates its ergot alkaloid pathway at elymoclavine. The polypeptide is Inactive cytochrome P450 monooxygenase cloA (Claviceps fusiformis (Ergot fungus)).